The primary structure comprises 152 residues: ADP-ribose glycohydrolase OARD1 (152 aa).

N-acetylalanine is present on Ala-2. In terms of domain architecture, Macro spans 2–152 (ASSLNEDPEG…TDIKITVYTL (151 aa)). A Phosphoserine modification is found at Ser-4. Leu-21 serves as a coordination point for substrate. Residue Lys-84 is the Nucleophile of the active site. Residues 119–125 (RIGCGLD) and Leu-152 each bind substrate. Residue Asp-125 is the Proton acceptor of the active site.

As to expression, ubiquitous.

The protein resides in the nucleus. The protein localises to the nucleoplasm. Its subcellular location is the nucleolus. It is found in the chromosome. The catalysed reaction is 2''-O-acetyl-ADP-D-ribose + H2O = ADP-D-ribose + acetate + H(+). It carries out the reaction 5-O-(ADP-D-ribosyl)-L-glutamyl-[protein] + H2O = L-glutamyl-[protein] + ADP-D-ribose + H(+). The enzyme catalyses alpha-NAD(+) + H2O = ADP-D-ribose + nicotinamide + H(+). With respect to regulation, subject to competitive inhibition by the product ADP-ribose. In terms of biological role, ADP-ribose glycohydrolase that hydrolyzes ADP-ribose and acts on different substrates, such as proteins ADP-ribosylated on glutamate and O-acetyl-ADP-D-ribose. Specifically acts as a glutamate mono-ADP-ribosylhydrolase by mediating the removal of mono-ADP-ribose attached to glutamate residues on proteins. Does not act on poly-ADP-ribosylated proteins: the poly-ADP-ribose chain of poly-ADP-ribosylated glutamate residues must by hydrolyzed into mono-ADP-ribosylated glutamate by PARG to become a substrate for OARD1. Deacetylates O-acetyl-ADP ribose, a signaling molecule generated by the deacetylation of acetylated lysine residues in histones and other proteins. Catalyzes the deacylation of O-acetyl-ADP-ribose, O-propionyl-ADP-ribose and O-butyryl-ADP-ribose, yielding ADP-ribose plus acetate, propionate and butyrate, respectively. This chain is ADP-ribose glycohydrolase OARD1, found in Homo sapiens (Human).